A 97-amino-acid polypeptide reads, in one-letter code: MEIKTTAVAGTLESSDIQIMISKGSNGIEIDLESEVKKAYGDQIEKVITETLKKYGLENAKVKATDKGALDCVIKARTLAVAQRATETQDKPDLEVL.

O-(phosphoribosyl dephospho-coenzyme A)serine is present on S14.

It belongs to the CitD family. Oligomer with a subunit composition of (alpha,beta,gamma)6.

Its subcellular location is the cytoplasm. Functionally, covalent carrier of the coenzyme of citrate lyase. The chain is Citrate lyase acyl carrier protein from Lactobacillus helveticus (strain DPC 4571).